We begin with the raw amino-acid sequence, 266 residues long: Ribonuclease 3 (266 aa).

Positions 8 to 130 constitute an RNase III domain; sequence LARLTKKLGY…IIGAVYLDSN (123 aa). Glu43 contributes to the Mg(2+) binding site. The active site involves Asp47. Positions 116 and 119 each coordinate Mg(2+). Residue Glu119 is part of the active site. The region spanning 157 to 227 is the DRBM domain; sequence DPKTRLQEFL…AQQILALIEK (71 aa). The interval 229–266 is disordered; it reads REQEKEVKIKPTKQAKLANPRHTKSNPSSSSKKSSTRK. The span at 253–266 shows a compositional bias: low complexity; the sequence is SNPSSSSKKSSTRK.

The protein belongs to the ribonuclease III family. Homodimer. Requires Mg(2+) as cofactor.

The protein resides in the cytoplasm. It catalyses the reaction Endonucleolytic cleavage to 5'-phosphomonoester.. Digests double-stranded RNA. Involved in the processing of primary rRNA transcript to yield the immediate precursors to the large and small rRNAs (23S and 16S). Processes some mRNAs, and tRNAs when they are encoded in the rRNA operon. Processes pre-crRNA and tracrRNA of type II CRISPR loci if present in the organism. The chain is Ribonuclease 3 from Colwellia psychrerythraea (strain 34H / ATCC BAA-681) (Vibrio psychroerythus).